Here is a 130-residue protein sequence, read N- to C-terminus: Sec-independent protein translocase protein TatB (130 aa).

The chain crosses the membrane as a helical span at residues 1 to 21 (MFDIGFWELVLIFVVGLVVLG). A disordered region spans residues 85–130 (LKQAAQSVNRPYADVSAKNEATSSSSSDATHQTEATKTSAANTKSE). Residues 112 to 130 (DATHQTEATKTSAANTKSE) show a composition bias toward polar residues.

It belongs to the TatB family. The Tat system comprises two distinct complexes: a TatABC complex, containing multiple copies of TatA, TatB and TatC subunits, and a separate TatA complex, containing only TatA subunits. Substrates initially bind to the TatABC complex, which probably triggers association of the separate TatA complex to form the active translocon.

The protein localises to the cell inner membrane. In terms of biological role, part of the twin-arginine translocation (Tat) system that transports large folded proteins containing a characteristic twin-arginine motif in their signal peptide across membranes. Together with TatC, TatB is part of a receptor directly interacting with Tat signal peptides. TatB may form an oligomeric binding site that transiently accommodates folded Tat precursor proteins before their translocation. This chain is Sec-independent protein translocase protein TatB, found in Vibrio vulnificus (strain CMCP6).